The sequence spans 507 residues: Cytochrome P450 3A28 (507 aa).

A heme-binding site is contributed by C442.

Belongs to the cytochrome P450 family. Heme is required as a cofactor.

It is found in the endoplasmic reticulum membrane. The protein localises to the microsome membrane. It catalyses the reaction an organic molecule + reduced [NADPH--hemoprotein reductase] + O2 = an alcohol + oxidized [NADPH--hemoprotein reductase] + H2O + H(+). Functionally, cytochromes P450 are a group of heme-thiolate monooxygenases. In liver microsomes, this enzyme is involved in an NADPH-dependent electron transport pathway. It oxidizes a variety of structurally unrelated compounds, including steroids, fatty acids, and xenobiotics. The sequence is that of Cytochrome P450 3A28 (CYP3A28) from Bos taurus (Bovine).